A 217-amino-acid polypeptide reads, in one-letter code: Non-structural protein NS3 (217 aa).

It belongs to the orbivirus NS3 family.

Its function is as follows. May play a role in the release of virions from infected cells. The sequence is that of Non-structural protein NS3 (Segment-10) from African horse sickness virus 9 (AHSV-9).